The chain runs to 302 residues: Sulfotransferase 1C4 (302 aa).

55-60 (KAGTTW) is a binding site for 3'-phosphoadenylyl sulfate. 113–115 (KTH) is a substrate binding site. His115 serves as the catalytic Proton acceptor. 3'-phosphoadenylyl sulfate is bound by residues Arg137, Ser145, Tyr200, 234–239 (TSFDVM), and 262–266 (FMRKG).

It belongs to the sulfotransferase 1 family. As to expression, expressed in liver, kidney and jejunum.

The protein resides in the cytoplasm. The protein localises to the cytosol. It catalyses the reaction a phenol + 3'-phosphoadenylyl sulfate = an aryl sulfate + adenosine 3',5'-bisphosphate + H(+). It carries out the reaction 17beta-estradiol + 3'-phosphoadenylyl sulfate = 17beta-estradiol 3-sulfate + adenosine 3',5'-bisphosphate + H(+). The enzyme catalyses bisphenol A + 3'-phosphoadenylyl sulfate = bisphenyl A sulfate + adenosine 3',5'-bisphosphate + H(+). In terms of biological role, sulfotransferase that utilizes 3'-phospho-5'-adenylyl sulfate (PAPS) as sulfonate donor to catalyze the sulfate conjugation of phenolic compounds and estrogen (E2). Can also sulfonate estrogenic compounds, however, the dietary flavonoids (phytoestrogen) and environmental estrogens, like bisphenol A are better substrates than 17beta-estradiol (E2). This is Sulfotransferase 1C4 (SULT1C4) from Macaca fascicularis (Crab-eating macaque).